We begin with the raw amino-acid sequence, 223 residues long: Cytidylate kinase (223 aa).

12 to 20 (GPSGVGKGT) lines the ATP pocket.

Belongs to the cytidylate kinase family. Type 1 subfamily.

The protein resides in the cytoplasm. It carries out the reaction CMP + ATP = CDP + ADP. The enzyme catalyses dCMP + ATP = dCDP + ADP. The polypeptide is Cytidylate kinase (Xylella fastidiosa (strain M12)).